The primary structure comprises 331 residues: Biotin synthase (331 aa).

The Radical SAM core domain maps to 52 to 277 (PDVEVEGIIS…RTMLRFAGGR (226 aa)). Positions 67, 71, and 74 each coordinate [4Fe-4S] cluster. Residues C110, C143, C202, and R272 each contribute to the [2Fe-2S] cluster site.

The protein belongs to the radical SAM superfamily. Biotin synthase family. Homodimer. It depends on [4Fe-4S] cluster as a cofactor. [2Fe-2S] cluster is required as a cofactor.

The catalysed reaction is (4R,5S)-dethiobiotin + (sulfur carrier)-SH + 2 reduced [2Fe-2S]-[ferredoxin] + 2 S-adenosyl-L-methionine = (sulfur carrier)-H + biotin + 2 5'-deoxyadenosine + 2 L-methionine + 2 oxidized [2Fe-2S]-[ferredoxin]. It participates in cofactor biosynthesis; biotin biosynthesis; biotin from 7,8-diaminononanoate: step 2/2. Functionally, catalyzes the conversion of dethiobiotin (DTB) to biotin by the insertion of a sulfur atom into dethiobiotin via a radical-based mechanism. This is Biotin synthase from Mycolicibacterium gilvum (strain PYR-GCK) (Mycobacterium gilvum (strain PYR-GCK)).